Consider the following 223-residue polypeptide: Large ribosomal subunit protein uL6c (223 aa).

The N-terminal 41 residues, 1–41 (MASSLVSSFQPRSAFLGDRNVFKVSSTPFAQVGYSSKTIEC), are a transit peptide targeting the chloroplast.

The protein belongs to the universal ribosomal protein uL6 family. As to quaternary structure, part of the 50S ribosomal subunit.

The protein localises to the plastid. It localises to the chloroplast. Its function is as follows. This protein binds directly to 23S ribosomal RNA and is located at the aminoacyl-tRNA binding site of the peptidyltransferase center. The chain is Large ribosomal subunit protein uL6c (RPL6) from Arabidopsis thaliana (Mouse-ear cress).